Consider the following 596-residue polypeptide: ATP-dependent lipid A-core flippase (596 aa).

A run of 6 helical transmembrane segments spans residues 34-54, 80-100, 138-158, 164-184, 263-283, and 292-312; these read VWVL…EAGI, AAVV…GYLL, AVVF…ITLV, VVFL…IVAI, QPLT…IAVV, and VGGF…LKHL. One can recognise an ABC transmembrane type-1 domain in the interval 38–321; the sequence is VAGVLAMAAV…LMDVNQPLQR (284 aa). The region spanning 353–589 is the ABC transporter domain; that stretch reads IEFSHVSFSY…GGLYAHLHRI (237 aa). Residue 389 to 396 participates in ATP binding; it reads GPSGSGKT.

This sequence belongs to the ABC transporter superfamily. Lipid exporter (TC 3.A.1.106) family. In terms of assembly, homodimer.

The protein localises to the cell inner membrane. It catalyses the reaction ATP + H2O + lipid A-core oligosaccharideSide 1 = ADP + phosphate + lipid A-core oligosaccharideSide 2.. Involved in lipopolysaccharide (LPS) biosynthesis. Translocates lipid A-core from the inner to the outer leaflet of the inner membrane. Transmembrane domains (TMD) form a pore in the inner membrane and the ATP-binding domain (NBD) is responsible for energy generation. The sequence is that of ATP-dependent lipid A-core flippase from Burkholderia thailandensis (strain ATCC 700388 / DSM 13276 / CCUG 48851 / CIP 106301 / E264).